Consider the following 346-residue polypeptide: Cytosolic sulfotransferase 17 (346 aa).

Residue 89 to 94 (KTGTTW) participates in 3'-phosphoadenylyl sulfate binding. Histidine 151 serves as the catalytic Proton acceptor. 3'-phosphoadenylyl sulfate contacts are provided by residues arginine 173, serine 181, tyrosine 239, and 309–311 (RKG).

This sequence belongs to the sulfotransferase 1 family. As to expression, highly expressed in roots, stems and mature leaves. Low expression in young leaves and flowers. Barely detected in siliques.

The protein resides in the cytoplasm. It catalyses the reaction an aliphatic (Z)-desulfo-glucosinolate + 3'-phosphoadenylyl sulfate = a (Z)-omega-(methylsulfanyl)-N-sulfo-alkylhydroximate S-glucoside + adenosine 3',5'-bisphosphate + H(+). With respect to regulation, inhibited by phosphoadenosine 5'-phosphate (PAP). Its function is as follows. Sulfotransferase that utilizes 3'-phospho-5'-adenylyl sulfate (PAPS) as sulfonate donor to catalyze the sulfate conjugation of desulfo-glucosinolates (dsGSs), the final step in the biosynthesis of the glucosinolate core structure. Substrate preference is desulfo-benzyl glucosinolate &gt; desulfo-6-methylthiohexyl glucosinolate. Increased specific activity with increasing chain length of desulfo-glucosinolate derived from methionine. Preferred substrate is desulfo-8-methylthiooctyl glucosinolate. This Arabidopsis thaliana (Mouse-ear cress) protein is Cytosolic sulfotransferase 17 (SOT17).